Reading from the N-terminus, the 188-residue chain is MSIKSDKWIRRMAAEYDMISPFEPDLVRQVNGEKVISFGTSSYGYDIRCADEFKVFTNINSTMVDPKNFDEKCFVDVKGEYCIIPPNSFALARTVEYFRIPRNVLTVCLGKSTYARCGIVVNVTPFEPEWEGYVTLEFSNTTPLPAKIYANEGVAQVLFFESDEVCEVSYRDRGGKYMGQVGVTLPRS.

DCTP is bound by residues 111–116 (KSTYAR), 135–137 (TLE), Gln-156, Tyr-170, and Gln-180. The active-site Proton donor/acceptor is the Glu-137.

The protein belongs to the dCTP deaminase family. As to quaternary structure, homotrimer.

The enzyme catalyses dCTP + H2O + H(+) = dUTP + NH4(+). It functions in the pathway pyrimidine metabolism; dUMP biosynthesis; dUMP from dCTP (dUTP route): step 1/2. Its function is as follows. Catalyzes the deamination of dCTP to dUTP. The polypeptide is dCTP deaminase (Laribacter hongkongensis (strain HLHK9)).